Consider the following 330-residue polypeptide: uncharacterized protein (330 aa).

125–132 (GPPGCGKT) provides a ligand contact to ATP.

It belongs to the AAA ATPase family.

This is an uncharacterized protein from Sinorhizobium fredii (strain NBRC 101917 / NGR234).